The chain runs to 446 residues: MTMFENVTRALARQLNPRGDLTPLDSLIDFKRFHPFCLVLRKRKSTLFWGARYVHTDYTLLDVLEPGSSPSDPTDSGNFSFKNMLDARVEGDVDVPKTVKVKGTAGLSRSSTLEVQTLSVAPTALENLHKERKLSADHPFLKEMRERGENLYVVMEVVETLQEVTLERAGKAEGCFSLPFFAPLGLQGSVNHKEAVTIPKGCVLAYRVRQLMVNGKDEWGIPHICNDSMQTFPPGEKPGEGKFILIQASDVGEMHEDFKTLKEEVQRETQEVEKLSPVGRSSLLTSLSHLLGKKKELQDLEQTLEGALDKGHEVTLEALPKDVLLSKDAMDAILYFLGALTVLSEAQQKLLVKSLEKKILPVQLKLVESTMEKNFLQDKEGVFPLQPDLLSSLGEEELILTEALVGLSGLEVQRSGPQYTWDPDTLPHLCALYAGLSLLQLLSKNS.

The segment at 1-252 is triggers pyroptosis; the sequence is MTMFENVTRA…FILIQASDVG (252 aa). Position 9-13 (9-13) interacts with a cardiolipin; it reads RALAR. Beta stranded transmembrane passes span 78–95, 99–120, 164–180, and 184–198; these read NFSF…DVDV, VKVK…TLSV, VTLE…SLPF, and LGLQ…AVTI.

It belongs to the gasdermin family. In terms of assembly, homooligomer; homooligomeric ring-shaped pore complex containing 18-36 subunits when inserted in the membrane. Post-translationally, cleavage by bacterial SpeB relieves autoinhibition by releasing the N-terminal moiety (Gasdermin-A, N-terminal) that initiates pyroptosis. In terms of processing, palmitoylated. As to expression, expressed predominantly in the gastrointestinal (GI) tract and in the skin at a lower level. In the GI tract, the expression is highly restricted to the esophagus and forestomach.

The protein localises to the cytoplasm. The protein resides in the perinuclear region. It is found in the cytosol. Its subcellular location is the cell membrane. The full-length protein before cleavage is inactive: intramolecular interactions between N- and C-terminal domains mediate autoinhibition in the absence of activation signal. The intrinsic pyroptosis-inducing activity is carried by the released N-terminal moiety (Gasdermin-A, N-terminal) following cleavage by bacterial effector protein SpeB. Its function is as follows. This form constitutes the precursor of the pore-forming protein and acts as a sensor of bacterial infection: upon infection, specifically cleaved by bacterial effector protein SpeB in epithelial cells, releasing the N-terminal moiety (Gasdermin-A, N-terminal) that binds to membranes and forms pores, triggering pyroptosis. In terms of biological role, pore-forming protein that causes membrane permeabilization and pyroptosis. Released upon cleavage by bacterial effector protein SpeB, and binds to membrane inner leaflet lipids. Homooligomerizes within the membrane and forms pores of 10-15 nanometers (nm) of inner diameter, triggering pyroptosis. Pyroptosis triggers the elimination of the infected skin cell, depriving the pathogen of its protective niche, while inducing an inflammatory response. This ultimately prevents bacterial penetration of the epithelial barrier and a subsequent systemic dissemination of the pathogen. Binds to cardiolipin and other acidic phospholipids, such as phosphatidylserine, which mediate its targeting to the inner leaflet membrane. In Mus musculus (Mouse), this protein is Gasdermin-A (Gsdma).